We begin with the raw amino-acid sequence, 287 residues long: MWALTADADFLAQRGQGQVEQVFARAVNIALPARQQLLTLLCEEYDNAPNSCRLALTHFDDLFRHGDKVQFDDQGITVGQHLHIEMSRCRRWLSPTLQMTAVNFHLIAWLQWHDIIHQHLGENETLFNYRGDNPFYQALNKELHIKRRAVIQAVNDKQNIASAVASMMGLGIGLTPSADDYLTGLALILFIPGHPAEKYKEEFYLGLQRGKNNTTLLSAITLEAALQQRCRENIHRFIHNIIYDIPGNATQAIEKIKHIGSSSGCDMLYGMADGCALSQTYGGNYVS.

It belongs to the AllH family.

This is an uncharacterized protein from Escherichia coli (strain K12).